An 86-amino-acid polypeptide reads, in one-letter code: Probable acyl carrier protein CCNA_01221 (86 aa).

Residues 6 to 83 form the Carrier domain; that stretch reads TVTDLSLREI…DLSKLINDLR (78 aa). Ser-43 carries the O-(pantetheine 4'-phosphoryl)serine modification.

Belongs to the acyl carrier protein (ACP) family.

It participates in lipid metabolism; sphingolipid metabolism. Functionally, involved in de novo bacterial ceramide synthesis. In Caulobacter vibrioides (strain NA1000 / CB15N) (Caulobacter crescentus), this protein is Probable acyl carrier protein CCNA_01221.